An 86-amino-acid chain; its full sequence is Putative membrane protein insertion efficiency factor (86 aa).

Belongs to the UPF0161 family.

It is found in the cell inner membrane. Its function is as follows. Could be involved in insertion of integral membrane proteins into the membrane. This Pseudomonas aeruginosa (strain UCBPP-PA14) protein is Putative membrane protein insertion efficiency factor.